The primary structure comprises 238 residues: Orotidine 5'-phosphate decarboxylase (238 aa).

Substrate is bound by residues Asp13, Lys35, Asp62–Thr71, Thr121, Arg182, Gln191, Gly211, and Arg212. Lys64 (proton donor) is an active-site residue.

This sequence belongs to the OMP decarboxylase family. Type 1 subfamily. As to quaternary structure, homodimer.

It carries out the reaction orotidine 5'-phosphate + H(+) = UMP + CO2. It participates in pyrimidine metabolism; UMP biosynthesis via de novo pathway; UMP from orotate: step 2/2. In terms of biological role, catalyzes the decarboxylation of orotidine 5'-monophosphate (OMP) to uridine 5'-monophosphate (UMP). The chain is Orotidine 5'-phosphate decarboxylase from Saccharophagus degradans (strain 2-40 / ATCC 43961 / DSM 17024).